Consider the following 695-residue polypeptide: Calcium-dependent serine proteinase (695 aa).

Positions 1–21 (MGKSSEAWCIVLFSVFASFSA) are cleaved as a signal peptide. In terms of domain architecture, CUB 1 spans 22–136 (EPTMHGEILS…TGFAAYYAAI (115 aa)). 4 disulfides stabilise this stretch: C71–C89, C141–C153, C149–C162, and C164–C177. Residues 137 to 178 (DVNECTDFTDVPCSHFCNNFIGGYFCSCPPEYFLHDDMRNCG) enclose the EGF-like; calcium-binding domain. N155 carries the (3R)-3-hydroxyasparagine modification. N-linked (GlcNAc...) asparagine glycosylation is present at N180. 6 cysteine pairs are disulfide-bonded: C181-C208, C240-C257, C300-C347, C327-C360, C365-C410, and C392-C428. The region spanning 181–296 (CSGNVFTALI…KGWKLRYHGD (116 aa)) is the CUB 2 domain. Sushi domains are found at residues 298-362 (IPCP…RCQP) and 363-430 (VDCG…KCVP). N-linked (GlcNAc...) asparagine glycosylation is present at N413. One can recognise a Peptidase S1 domain in the interval 445-687 (IFGGFPAKIQ…YKDWILQTMQ (243 aa)). Active-site charge relay system residues include H482 and D536. Intrachain disulfides connect C602–C625 and C634–C666. Catalysis depends on S638, which acts as the Charge relay system.

This sequence belongs to the peptidase S1 family. In terms of assembly, heterodimer, consisting of heavy and light chains with disulfide bonds. The heavy chain is expected to be a regulatory subunit and the light chain contains the catalytic site. In terms of processing, the iron and 2-oxoglutarate dependent 3-hydroxylation of aspartate and asparagine is (R) stereospecific within EGF domains.

The protein resides in the secreted. Its subcellular location is the extracellular space. It is found in the extracellular matrix. In terms of biological role, capable of degrading extracellular matrix proteins. CASP degrades type I and IV collagen and fibronectin in the presence of calcium. This Mesocricetus auratus (Golden hamster) protein is Calcium-dependent serine proteinase.